The following is a 1379-amino-acid chain: DNA-directed RNA polymerase subunit beta (1379 aa).

The protein belongs to the RNA polymerase beta chain family. As to quaternary structure, the RNAP catalytic core consists of 2 alpha, 1 beta, 1 beta' and 1 omega subunit. When a sigma factor is associated with the core the holoenzyme is formed, which can initiate transcription.

The enzyme catalyses RNA(n) + a ribonucleoside 5'-triphosphate = RNA(n+1) + diphosphate. DNA-dependent RNA polymerase catalyzes the transcription of DNA into RNA using the four ribonucleoside triphosphates as substrates. The protein is DNA-directed RNA polymerase subunit beta of Ruegeria sp. (strain TM1040) (Silicibacter sp.).